A 212-amino-acid chain; its full sequence is Glycerol-3-phosphate acyltransferase (212 aa).

The next 5 helical transmembrane spans lie at 5–25, 53–73, 80–100, 112–132, and 138–158; these read ALGM…ILVC, VAAA…VWLA, PLYL…PVFF, FGAI…TWLL, and GYSS…VWWF.

This sequence belongs to the PlsY family. In terms of assembly, probably interacts with PlsX.

Its subcellular location is the cell inner membrane. It catalyses the reaction an acyl phosphate + sn-glycerol 3-phosphate = a 1-acyl-sn-glycero-3-phosphate + phosphate. It functions in the pathway lipid metabolism; phospholipid metabolism. Its function is as follows. Catalyzes the transfer of an acyl group from acyl-phosphate (acyl-PO(4)) to glycerol-3-phosphate (G3P) to form lysophosphatidic acid (LPA). This enzyme utilizes acyl-phosphate as fatty acyl donor, but not acyl-CoA or acyl-ACP. The polypeptide is Glycerol-3-phosphate acyltransferase (Serratia proteamaculans (strain 568)).